Here is a 635-residue protein sequence, read N- to C-terminus: Ligand-gated ion channel 4 (635 aa).

An N-terminal signal peptide occupies residues 1–24; sequence MIICYSCLTVSILLTIKFVPCRFA. Over 25 to 324 the chain is Extracellular; the sequence is GIEHQNTKSR…IHMHRRPLFY (300 aa). N-linked (GlcNAc...) asparagine glycans are attached at residues N46, N139, N177, and N225. Cysteines 238 and 252 form a disulfide. N282 carries an N-linked (GlcNAc...) asparagine glycan. The next 3 membrane-spanning stretches (helical) occupy residues 325-345, 355-375, and 381-401; these read VFNHIVPCVLISSMAVLGFLM, MIITTLLSMGVYLQSITESIP, and VPLIGMYYVSSLLMVCLATCV. Topologically, residues 402-599 are cytoplasmic; it reads NVITLNMHRN…QQLASVVDRL (198 aa). The helical transmembrane segment at 600-620 threads the bilayer; the sequence is LLCLFCTATLFTIICLLIVPV. N-linked (GlcNAc...) asparagine glycosylation occurs at N625.

It belongs to the ligand-gated ion channel (TC 1.A.9) family.

It is found in the postsynaptic cell membrane. It localises to the cell membrane. Possible acetylcholine receptor. The chain is Ligand-gated ion channel 4 (lgc-4) from Caenorhabditis elegans.